Reading from the N-terminus, the 158-residue chain is Glycine/sarcosine/betaine reductase complex component A1 (158 aa).

Residue Sec46 is part of the active site. Position 46 (Sec46) is a non-standard amino acid, selenocysteine.

This sequence belongs to the GrdA family. In terms of assembly, monomer. Component of the glycine, sarcosine and betaine reductase complexes, together with components B and C.

The catalysed reaction is acetyl phosphate + [thioredoxin]-disulfide + NH4(+) + H2O = [thioredoxin]-dithiol + glycine + phosphate + H(+). It carries out the reaction acetyl phosphate + methylamine + [thioredoxin]-disulfide + H2O = sarcosine + [thioredoxin]-dithiol + phosphate + H(+). The enzyme catalyses acetyl phosphate + trimethylamine + [thioredoxin]-disulfide + H2O = glycine betaine + [thioredoxin]-dithiol + phosphate + H(+). Functionally, in the first step of glycine, betaine and sarcosine reductases, the substrate is bound to component PB via a Schiff base intermediate. Then the PB-activated substrate is nucleophilically attacked by the selenol anion of component PA to transform it to a carboxymethylated selenoether and the respective amine. By action of component PC, acetyl phosphate is formed, leaving component PA in its oxidized state. Finally component PA becomes reduced by the thioredoxin system to start a new catalytic cycle of reductive deamination. The chain is Glycine/sarcosine/betaine reductase complex component A1 (grdA1) from Photobacterium profundum (strain SS9).